We begin with the raw amino-acid sequence, 429 residues long: Enolase (429 aa).

Residue glutamine 162 participates in (2R)-2-phosphoglycerate binding. Residue glutamate 204 is the Proton donor of the active site. Mg(2+) is bound by residues aspartate 241, glutamate 288, and aspartate 315. Lysine 340, arginine 369, serine 370, and lysine 391 together coordinate (2R)-2-phosphoglycerate. Catalysis depends on lysine 340, which acts as the Proton acceptor.

It belongs to the enolase family. Mg(2+) is required as a cofactor.

It localises to the cytoplasm. Its subcellular location is the secreted. The protein localises to the cell surface. The catalysed reaction is (2R)-2-phosphoglycerate = phosphoenolpyruvate + H2O. Its pathway is carbohydrate degradation; glycolysis; pyruvate from D-glyceraldehyde 3-phosphate: step 4/5. In terms of biological role, catalyzes the reversible conversion of 2-phosphoglycerate (2-PG) into phosphoenolpyruvate (PEP). It is essential for the degradation of carbohydrates via glycolysis. In Christiangramia forsetii (strain DSM 17595 / CGMCC 1.15422 / KT0803) (Gramella forsetii), this protein is Enolase.